A 354-amino-acid polypeptide reads, in one-letter code: Mitogen-activated protein kinase kinase 1 (354 aa).

One can recognise a Protein kinase domain in the interval 68-328 (LEVIKVIGKG…AKELLEHKFV (261 aa)). ATP-binding positions include 74-82 (IGKGSSGNV) and Lys-97. The Proton acceptor role is filled by Asp-190. The residue at position 218 (Thr-218) is a Phosphothreonine. Ser-224 carries the post-translational modification Phosphoserine. A Phosphothreonine modification is found at Thr-228.

It belongs to the protein kinase superfamily. STE Ser/Thr protein kinase family. MAP kinase kinase subfamily. As to quaternary structure, interacts with MEKK1 and MPK4. May form a ternary complex composed of MEKK1 and MKK1/MKK2 and MPK4. Interacts with P.syringae type III effector HopF2. Interacts with MPK11. Phosphorylation at Thr-218 and Ser-224 by MAP kinase kinase kinases positively regulates kinase activity. As to expression, expressed in roots, stem, flowers and siliques.

It carries out the reaction L-seryl-[protein] + ATP = O-phospho-L-seryl-[protein] + ADP + H(+). The enzyme catalyses L-threonyl-[protein] + ATP = O-phospho-L-threonyl-[protein] + ADP + H(+). It catalyses the reaction L-tyrosyl-[protein] + ATP = O-phospho-L-tyrosyl-[protein] + ADP + H(+). Its activity is regulated as follows. Activated through serine and threonine phosphorylation in response to wounding, cold, drought, salt stresses, abscisic acid (ABA), hydrogen peroxide, bacterial flagellin and laminarin beta-glucan. MEKK1, MKK1/MKK2 and MPK4/MPK6 function in a signaling pathway that modulates the expression of genes responding to biotic and abiotic stresses and also plays an important role in pathogen defense by negatively regulating innate immunity. Activates by phosphorylation the downstream MPK4. Acts redundantly with MKK2. MKK1-MPK6 module mediates abscisic acid (ABA)-dependent CAT1 expression with H(2)O(2) production and response to drought and salt stress. MKK1-MPK6 module is also involved in sugar signaling during the process of seed germination. The sequence is that of Mitogen-activated protein kinase kinase 1 (MKK1) from Arabidopsis thaliana (Mouse-ear cress).